The chain runs to 215 residues: Cytochrome b6 (215 aa).

A helical transmembrane segment spans residues 32–52 (IFYCLGGITLTCFLVQVATGF). Cys-35 contributes to the heme c binding site. The heme b site is built by His-86 and His-100. Transmembrane regions (helical) follow at residues 90 to 110 (ASMM…TGGF), 116 to 136 (LTWV…VTGY), and 186 to 206 (LHTF…FPMI). Heme b-binding residues include His-187 and His-202.

Belongs to the cytochrome b family. PetB subfamily. As to quaternary structure, the 4 large subunits of the cytochrome b6-f complex are cytochrome b6, subunit IV (17 kDa polypeptide, PetD), cytochrome f and the Rieske protein, while the 4 small subunits are PetG, PetL, PetM and PetN. The complex functions as a dimer. Heme b serves as cofactor. It depends on heme c as a cofactor.

Its subcellular location is the plastid. The protein localises to the chloroplast thylakoid membrane. In terms of biological role, component of the cytochrome b6-f complex, which mediates electron transfer between photosystem II (PSII) and photosystem I (PSI), cyclic electron flow around PSI, and state transitions. This chain is Cytochrome b6, found in Cucumis sativus (Cucumber).